Reading from the N-terminus, the 334-residue chain is Malate dehydrogenase 2 (334 aa).

An NAD(+)-binding site is contributed by 12 to 18; sequence GAAGRVA. Positions 93 and 99 each coordinate substrate. NAD(+)-binding positions include asparagine 106, glutamine 113, and 130-132; that span reads VGN. Substrate is bound by residues asparagine 132 and arginine 166. Histidine 191 (proton acceptor) is an active-site residue.

It belongs to the LDH/MDH superfamily. MDH type 2 family.

It carries out the reaction (S)-malate + NAD(+) = oxaloacetate + NADH + H(+). Functionally, catalyzes the reversible oxidation of malate to oxaloacetate. The protein is Malate dehydrogenase 2 of Albidiferax ferrireducens (strain ATCC BAA-621 / DSM 15236 / T118) (Rhodoferax ferrireducens).